We begin with the raw amino-acid sequence, 262 residues long: Oxidoreductase AgnL4 (262 aa).

The protein belongs to the avfA family.

The protein operates within secondary metabolite biosynthesis. In terms of biological role, oxidoreductase; part of the gene cluster that mediates the biosynthesis of agnestins, dihydroxy-xanthone metabolites. The pathway begins with the assembly and cyclization of atrochrysone thioester by the non-reducing polyketide synthase Agnpks1. The atrochrysone carboxyl ACP thioesterase AgnL7 then breaks the thioester bond and releases the atrochrysone carboxylic acid as the first enzyme-free intermediate. The decarboxylase AgnL1 then catalyzes the concerted decarboxylation-elimination required to convert atochrysone carboxylic acid into emodin anthrone, which is further oxidized to emodin by the anthrone oxygenase AgnL2. Emodin then undergoes reduction catalyzed by the oxidoreductase AgnL4 to yield the dihydroquinone tautomer which is the substrate for reduction by the short chain dehydrogenase AgnL6 reduction to produce hydroxyketone, followed by AgnL8 dehydration and likely spontaneous autoxidation to chrysophanol. Baeyer-Villiger oxidation by the oxidase AgnL3 leads to monodictyphenone via cleavage of the C-10/C-10a bond of chrysophanol. Alternative cleavage at the C-4a/C-10 bond of chrysophanol also leads to the formation some cephalone F. Further conversion to agnestins A and B, requires reduction to dihydro-monodictyphenone, oxidation to agnestin C probably via an epoxide, and rearrangement to either agnestin A or agnestin B directly, although agnestin A or agnestin B can also interconvert. Within the cluster, AgnR1 is the only unassigned oxidoreductase present which could be involved in this conversion. However, AgnR1 seems not to be involved in this step, and thus genes involved in the proposed oxidation/reduction may be located elsewhere on the genome. Further agnestin A derivatives are probably formed by spontaneous decarboxylations, dehydrations and methanolysis reactions. In Paecilomyces divaricatus (Penicillium divaricatum), this protein is Oxidoreductase AgnL4.